We begin with the raw amino-acid sequence, 145 residues long: Putative pre-16S rRNA nuclease (145 aa).

It belongs to the YqgF nuclease family.

It is found in the cytoplasm. Could be a nuclease involved in processing of the 5'-end of pre-16S rRNA. This is Putative pre-16S rRNA nuclease from Pseudomonas fluorescens (strain SBW25).